The primary structure comprises 86 residues: Large ribosomal subunit protein bL31 (86 aa).

The segment at 65–86 (YGMGSANSATSKEQKEEKDSNK) is disordered. Over residues 76-86 (KEQKEEKDSNK) the composition is skewed to basic and acidic residues.

The protein belongs to the bacterial ribosomal protein bL31 family. Type A subfamily. In terms of assembly, part of the 50S ribosomal subunit.

In terms of biological role, binds the 23S rRNA. This Prochlorococcus marinus (strain MIT 9312) protein is Large ribosomal subunit protein bL31.